A 177-amino-acid polypeptide reads, in one-letter code: Large ribosomal subunit protein bL31m (177 aa).

Residues 1-14 constitute a mitochondrion transit peptide; the sequence is MLKSIFAKRFASTG. The sufficient for general mitochondrial translation stretch occupies residues 36 to 118; the sequence is KSRPAIYHQF…FSVDSTTPNS (83 aa). Positions 87-177 are sufficient for dosage suppression of COX2 mutation; it reads LVVVDANSGG…KLASKKRDKK (91 aa). Over residues 111–123 the composition is skewed to polar residues; that stretch reads VDSTTPNSSSETV. The segment at 111 to 144 is disordered; sequence VDSTTPNSSSETVELSEENKKKTQIKKEEKEDVS. Positions 127–144 are enriched in basic and acidic residues; it reads EENKKKTQIKKEEKEDVS.

This sequence belongs to the bacterial ribosomal protein bL31 family. Highly divergent. As to quaternary structure, component of the mitochondrial large ribosomal subunit (mt-LSU). Mature yeast 74S mitochondrial ribosomes consist of a small (37S) and a large (54S) subunit. The 37S small subunit contains a 15S ribosomal RNA (15S mt-rRNA) and 34 different proteins. The 54S large subunit contains a 21S rRNA (21S mt-rRNA) and 46 different proteins.

The protein resides in the mitochondrion. In terms of biological role, component of the mitochondrial ribosome (mitoribosome), a dedicated translation machinery responsible for the synthesis of mitochondrial genome-encoded proteins, including at least some of the essential transmembrane subunits of the mitochondrial respiratory chain. The mitoribosomes are attached to the mitochondrial inner membrane and translation products are cotranslationally integrated into the membrane. Overexpression of bL31m suppresses mutations in the COX2 leader peptide-encoding and initiation codon regions. The protein is Large ribosomal subunit protein bL31m (MRPL36) of Saccharomyces cerevisiae (strain ATCC 204508 / S288c) (Baker's yeast).